Here is a 1154-residue protein sequence, read N- to C-terminus: Chromosome partition protein Smc (1154 aa).

An ATP-binding site is contributed by 32 to 39; sequence PNGCGKSN. Coiled coils occupy residues 170–215, 282–505, and 627–993; these read VAGL…ARQA, LREA…LNGE, and AARR…EARE.

The protein belongs to the SMC family. Homodimer.

The protein localises to the cytoplasm. In terms of biological role, required for chromosome condensation and partitioning. The polypeptide is Chromosome partition protein Smc (Rhodopseudomonas palustris (strain ATCC BAA-98 / CGA009)).